The primary structure comprises 331 residues: uncharacterized protein (331 aa).

Pentapeptide repeat domains follow at residues 50–89, 90–129, 140–179, 185–224, and 230–269; these read ENLQ…RLGH, CQMN…NFKG, ANLR…NLQE, ANLR…KLTG, and TNLS…NLTQ.

This is an uncharacterized protein from Synechocystis sp. (strain ATCC 27184 / PCC 6803 / Kazusa).